Reading from the N-terminus, the 127-residue chain is Small ribosomal subunit protein uS11 (127 aa).

The protein belongs to the universal ribosomal protein uS11 family. Part of the 30S ribosomal subunit.

Functionally, located on the platform of the 30S subunit. The chain is Small ribosomal subunit protein uS11 from Picrophilus torridus (strain ATCC 700027 / DSM 9790 / JCM 10055 / NBRC 100828 / KAW 2/3).